The following is a 71-amino-acid chain: Protein SlyX homolog (71 aa).

Belongs to the SlyX family.

The protein is Protein SlyX homolog of Rhodospirillum rubrum (strain ATCC 11170 / ATH 1.1.1 / DSM 467 / LMG 4362 / NCIMB 8255 / S1).